Consider the following 72-residue polypeptide: Translation initiation factor IF-1 (72 aa).

Positions 1 to 72 constitute an S1-like domain; that stretch reads MAKEDVIEVE…TRGRITYRFK (72 aa).

The protein belongs to the IF-1 family. As to quaternary structure, component of the 30S ribosomal translation pre-initiation complex which assembles on the 30S ribosome in the order IF-2 and IF-3, IF-1 and N-formylmethionyl-tRNA(fMet); mRNA recruitment can occur at any time during PIC assembly.

It is found in the cytoplasm. Functionally, one of the essential components for the initiation of protein synthesis. Stabilizes the binding of IF-2 and IF-3 on the 30S subunit to which N-formylmethionyl-tRNA(fMet) subsequently binds. Helps modulate mRNA selection, yielding the 30S pre-initiation complex (PIC). Upon addition of the 50S ribosomal subunit IF-1, IF-2 and IF-3 are released leaving the mature 70S translation initiation complex. This Listeria innocua serovar 6a (strain ATCC BAA-680 / CLIP 11262) protein is Translation initiation factor IF-1.